The sequence spans 440 residues: Chromosomal replication initiator protein DnaA (440 aa).

The domain I, interacts with DnaA modulators stretch occupies residues 1–74; the sequence is MNPSQILENL…VQSGNKAIIN (74 aa). Positions 74-99 are domain II; the sequence is NIQAQSAKQSNKSTKIDIAHIKAQST. A domain III, AAA+ region region spans residues 100–316; that stretch reads ILNPSFTFDS…GIIISLNAYA (217 aa). Residues glycine 146, glycine 148, lysine 149, and threonine 150 each contribute to the ATP site. The domain IV, binds dsDNA stretch occupies residues 317–440; it reads TILGQEITLE…KNKILVKSQS (124 aa).

The protein belongs to the DnaA family. Oligomerizes as a right-handed, spiral filament on DNA at oriC.

Its subcellular location is the cytoplasm. Functionally, plays an essential role in the initiation and regulation of chromosomal replication. ATP-DnaA binds to the origin of replication (oriC) to initiate formation of the DNA replication initiation complex once per cell cycle. Binds the DnaA box (a 9 base pair repeat at the origin) and separates the double-stranded (ds)DNA. Forms a right-handed helical filament on oriC DNA; dsDNA binds to the exterior of the filament while single-stranded (ss)DNA is stabiized in the filament's interior. The ATP-DnaA-oriC complex binds and stabilizes one strand of the AT-rich DNA unwinding element (DUE), permitting loading of DNA polymerase. After initiation quickly degrades to an ADP-DnaA complex that is not apt for DNA replication. Binds acidic phospholipids. In Campylobacter jejuni (strain RM1221), this protein is Chromosomal replication initiator protein DnaA.